Reading from the N-terminus, the 429-residue chain is Glutamate-1-semialdehyde 2,1-aminomutase 2 (429 aa).

Lysine 268 carries the post-translational modification N6-(pyridoxal phosphate)lysine.

The protein belongs to the class-III pyridoxal-phosphate-dependent aminotransferase family. HemL subfamily. In terms of assembly, homodimer. Pyridoxal 5'-phosphate serves as cofactor.

It is found in the cytoplasm. It carries out the reaction (S)-4-amino-5-oxopentanoate = 5-aminolevulinate. It participates in porphyrin-containing compound metabolism; protoporphyrin-IX biosynthesis; 5-aminolevulinate from L-glutamyl-tRNA(Glu): step 2/2. In Bacillus cereus (strain ATCC 10987 / NRS 248), this protein is Glutamate-1-semialdehyde 2,1-aminomutase 2.